The primary structure comprises 118 residues: Large ribosomal subunit protein bL20 (118 aa).

It belongs to the bacterial ribosomal protein bL20 family.

In terms of biological role, binds directly to 23S ribosomal RNA and is necessary for the in vitro assembly process of the 50S ribosomal subunit. It is not involved in the protein synthesizing functions of that subunit. This chain is Large ribosomal subunit protein bL20, found in Lactobacillus johnsonii (strain CNCM I-12250 / La1 / NCC 533).